Here is a 104-residue protein sequence, read N- to C-terminus: Large ribosomal subunit protein uL24 (104 aa).

The protein belongs to the universal ribosomal protein uL24 family. Part of the 50S ribosomal subunit.

Functionally, one of two assembly initiator proteins, it binds directly to the 5'-end of the 23S rRNA, where it nucleates assembly of the 50S subunit. One of the proteins that surrounds the polypeptide exit tunnel on the outside of the subunit. This is Large ribosomal subunit protein uL24 from Mesorhizobium japonicum (strain LMG 29417 / CECT 9101 / MAFF 303099) (Mesorhizobium loti (strain MAFF 303099)).